We begin with the raw amino-acid sequence, 254 residues long: Metalloprotease YcaL (254 aa).

Residues Met-1–Gly-19 form the signal peptide. Cys-20 carries the N-palmitoyl cysteine lipid modification. Cys-20 carries S-diacylglycerol cysteine lipidation. Position 134 (His-134) interacts with Zn(2+). The active site involves Glu-135. Positions 138 and 193 each coordinate Zn(2+). Residues Gly-227–Lys-254 are disordered. A compositionally biased stretch (basic and acidic residues) spans Arg-242–Lys-254.

This sequence belongs to the peptidase M48B family. Zn(2+) serves as cofactor.

It localises to the cell inner membrane. In terms of biological role, involved in the degradation of the LPS-assembly protein LptD. Degrades LptD that have engaged the Bam complex but are stalled at an early step in the outer membrane protein assembly process. The sequence is that of Metalloprotease YcaL (ycaL) from Escherichia coli (strain K12).